Here is a 150-residue protein sequence, read N- to C-terminus: D-aminoacyl-tRNA deacylase (150 aa).

The Gly-cisPro motif, important for rejection of L-amino acids motif lies at 138–139; that stretch reads GP.

Belongs to the DTD family. In terms of assembly, homodimer.

The protein localises to the cytoplasm. It carries out the reaction glycyl-tRNA(Ala) + H2O = tRNA(Ala) + glycine + H(+). It catalyses the reaction a D-aminoacyl-tRNA + H2O = a tRNA + a D-alpha-amino acid + H(+). An aminoacyl-tRNA editing enzyme that deacylates mischarged D-aminoacyl-tRNAs. Also deacylates mischarged glycyl-tRNA(Ala), protecting cells against glycine mischarging by AlaRS. Acts via tRNA-based rather than protein-based catalysis; rejects L-amino acids rather than detecting D-amino acids in the active site. By recycling D-aminoacyl-tRNA to D-amino acids and free tRNA molecules, this enzyme counteracts the toxicity associated with the formation of D-aminoacyl-tRNA entities in vivo and helps enforce protein L-homochirality. The chain is D-aminoacyl-tRNA deacylase from Azobacteroides pseudotrichonymphae genomovar. CFP2.